The sequence spans 681 residues: Type VI secretion system spike protein VgrG1 (681 aa).

Residues Asn621 to Pro640 form a disordered region.

It belongs to the VgrG protein family.

It is found in the secreted. The catalysed reaction is L-arginyl-[protein] + NAD(+) = N(omega)-(ADP-D-ribosyl)-L-arginyl-[protein] + nicotinamide + H(+). Its function is as follows. Part of the type VI secretion system specialized secretion system, which delivers several virulence factors in both prokaryotic and eukaryotic cells during infection. Acts directly as an secreted effector with an actin ADP-ribosyltransferase activity that disrupts the host actin cytoskeleton, leading to a decrease in host cell viability and an increase in apoptosis. This chain is Type VI secretion system spike protein VgrG1 (vgrG1), found in Aeromonas hydrophila.